A 442-amino-acid chain; its full sequence is UDP-N-acetylmuramoylalanine--D-glutamate ligase (442 aa).

Position 113–119 (113–119 (GSNGKTT)) interacts with ATP.

The protein belongs to the MurCDEF family.

It is found in the cytoplasm. The catalysed reaction is UDP-N-acetyl-alpha-D-muramoyl-L-alanine + D-glutamate + ATP = UDP-N-acetyl-alpha-D-muramoyl-L-alanyl-D-glutamate + ADP + phosphate + H(+). Its pathway is cell wall biogenesis; peptidoglycan biosynthesis. Its function is as follows. Cell wall formation. Catalyzes the addition of glutamate to the nucleotide precursor UDP-N-acetylmuramoyl-L-alanine (UMA). This chain is UDP-N-acetylmuramoylalanine--D-glutamate ligase, found in Coxiella burnetii (strain Dugway 5J108-111).